Here is a 300-residue protein sequence, read N- to C-terminus: Cysteine-rich venom protein (300 aa).

The signal sequence occupies residues 1–21 (MLSTMQTVGAVLMLSIVLVAG). Positions 22 to 24 (RKR) are excised as a propeptide. An SCP domain is found at 62 to 183 (LEMHNKIRAD…GNNKYFVCNY (122 aa)).

Contains 11 disulfide bonds. In terms of tissue distribution, expressed by the venom duct.

The protein resides in the secreted. Functionally, protease responsible for cleaving the conotoxins from their propeptide precursors. The target propeptide requires minimum four residues including a leucine N-terminal of the cleavage site for efficient substrate processing (example: Xaa-Xaa-Xaa-Leu-Asn-Lys-Arg-toxin). This is Cysteine-rich venom protein from Conus textile (Cloth-of-gold cone).